The primary structure comprises 98 residues: MANTNSAKKRIQIAERNRLENKNYKSTVRTLMKRCFVACGIFEKEPGDESKADLQKTFNLAFSKIDKAVKKGVLHKNTGANQKSRLSVALKKVLKEVV.

Belongs to the bacterial ribosomal protein bS20 family.

Functionally, binds directly to 16S ribosomal RNA. This is Small ribosomal subunit protein bS20 from Prochlorococcus marinus (strain NATL1A).